Here is a 345-residue protein sequence, read N- to C-terminus: Ribosomal RNA small subunit methyltransferase C (345 aa).

The protein belongs to the methyltransferase superfamily. RsmC family. Monomer.

It localises to the cytoplasm. It carries out the reaction guanosine(1207) in 16S rRNA + S-adenosyl-L-methionine = N(2)-methylguanosine(1207) in 16S rRNA + S-adenosyl-L-homocysteine + H(+). Its function is as follows. Specifically methylates the guanine in position 1207 of 16S rRNA in the 30S particle. The sequence is that of Ribosomal RNA small subunit methyltransferase C from Shewanella denitrificans (strain OS217 / ATCC BAA-1090 / DSM 15013).